The primary structure comprises 380 residues: Tomoregulin-1 (380 aa).

Residues 1–39 form the signal peptide; the sequence is MGAAAAEAPLRLPAAPPLAFCCYTSVLLLFAFSLPGSRA. Over 40–330 the chain is Extracellular; the sequence is SNQPPGGGGG…VPSRQKLTHV (291 aa). Kazal-like domains follow at residues 98 to 145 and 189 to 237; these read ACQF…PCYS and VCNI…HCTD. Disulfide bonds link cysteine 99/cysteine 129, cysteine 103/cysteine 122, cysteine 111/cysteine 143, cysteine 190/cysteine 221, cysteine 194/cysteine 214, cysteine 203/cysteine 235, cysteine 275/cysteine 288, cysteine 283/cysteine 299, and cysteine 301/cysteine 310. In terms of domain architecture, EGF-like spans 271–311; it reads NHMPCPENLNGYCIHGKCEFIYSTQKASCRCESGYTGQHCE. Residues 331-351 form a helical membrane-spanning segment; sequence LIAAIIGAVQIAIIVAIVMCI. Topologically, residues 352–380 are cytoplasmic; sequence TRKCPKNNRGRRQKQNLGHFTSDTSSRMV. Residues 359-380 are disordered; sequence NRGRRQKQNLGHFTSDTSSRMV. The span at 366–380 shows a compositional bias: polar residues; it reads QNLGHFTSDTSSRMV.

The protein belongs to the tomoregulin family. May interact with ST14. Expressed predominantly in brain, and at lower levels in heart, placenta and skeletal muscle. Down-regulated in brain tumors as compared to control brain tissues.

The protein localises to the cell membrane. Neuron-specific restriction factor that prevents herpes simplex virus 1 (HHV-1) infection in the brain by blocking viral entry. Also able to restrict herpes simplex virus 2 (HHV-2) infection, although to a lesser extent. Acts by preventing the association between the viral glycoprotein D (gD) and its cell surface receptor NECTIN1, thereby inhibiting fusion of the virus and the cell membrane. Also able to prevent the association between the viral glycoprotein B (gB) and MYH9/NMMHC-IIA and MYH10/NMMHC-IIB receptors. May be a tumor suppressor in brain cancers. This is Tomoregulin-1 from Homo sapiens (Human).